An 84-amino-acid polypeptide reads, in one-letter code: Small nuclear ribonucleoprotein E (84 aa).

One can recognise a Sm domain in the interval 13-84; sequence INFIFKLLQQ…GDNITLIQAI (72 aa).

It belongs to the snRNP Sm proteins family. In terms of assembly, component of the Sm core complex, present in spliceosomal snRNP U1, U2, U4/U6 and U5. The core complex contains smb1, smd1, smd2, smd3, sme1, smf1 and smg1 (Sm proteins B, D1, D2, D3, E, F and G, respectively), and is probably a heptameric ring structure.

The protein resides in the cytoplasm. It localises to the nucleus. Functionally, involved in pre-mRNA splicing. Binds and is required for the stability of snRNA U1, U2, U4 and U5 which contain a highly conserved structural motif called the Sm binding site. Involved in cap modification. This Schizosaccharomyces pombe (strain 972 / ATCC 24843) (Fission yeast) protein is Small nuclear ribonucleoprotein E.